A 272-amino-acid polypeptide reads, in one-letter code: Shikimate dehydrogenase (NADP(+)) (272 aa).

Residues 16–18 (SLS) and Thr-63 each bind shikimate. Lys-67 serves as the catalytic Proton acceptor. An NADP(+)-binding site is contributed by Glu-79. Shikimate contacts are provided by Asn-88 and Asp-103. NADP(+) contacts are provided by residues 127-131 (GAGGA), 151-156 (NRTMSR), and Ile-212. Tyr-214 contacts shikimate. An NADP(+)-binding site is contributed by Gly-235.

It belongs to the shikimate dehydrogenase family. As to quaternary structure, homodimer.

The enzyme catalyses shikimate + NADP(+) = 3-dehydroshikimate + NADPH + H(+). It functions in the pathway metabolic intermediate biosynthesis; chorismate biosynthesis; chorismate from D-erythrose 4-phosphate and phosphoenolpyruvate: step 4/7. Involved in the biosynthesis of the chorismate, which leads to the biosynthesis of aromatic amino acids. Catalyzes the reversible NADPH linked reduction of 3-dehydroshikimate (DHSA) to yield shikimate (SA). The chain is Shikimate dehydrogenase (NADP(+)) from Staphylococcus epidermidis (strain ATCC 12228 / FDA PCI 1200).